Consider the following 325-residue polypeptide: Pyruvate dehydrogenase E1 component subunit beta (325 aa).

Thiamine diphosphate is bound at residue E60.

Heterodimer of an alpha and a beta chain. Requires thiamine diphosphate as cofactor.

The catalysed reaction is N(6)-[(R)-lipoyl]-L-lysyl-[protein] + pyruvate + H(+) = N(6)-[(R)-S(8)-acetyldihydrolipoyl]-L-lysyl-[protein] + CO2. The pyruvate dehydrogenase complex catalyzes the overall conversion of pyruvate to acetyl-CoA and CO(2). It contains multiple copies of three enzymatic components: pyruvate dehydrogenase (E1), dihydrolipoamide acetyltransferase (E2) and lipoamide dehydrogenase (E3). This is Pyruvate dehydrogenase E1 component subunit beta (pdhB) from Staphylococcus aureus (strain COL).